Reading from the N-terminus, the 359-residue chain is MNIYDQLQSLEDRYEELGELLSDPEVVSDTKRFMELSKEEANTRETVATYRQYKDIIQSISDAEEMIKESGGDPEIEEMAKEELKESKVAKEDYEEKLKILLLPKDPNDDKNIILEIRGAAGGDEAALFAGDLLDMYQRFAESQGWRFEVMEASYNGVGGIKEVVAMVSGQSVYSKLKYESGAHRVQRVPVTESQGRVHTSTATVLVMPEIEDVEYDIDPKDLRIDIYHASGAGGQNVNKVATAVRIVHLPTNIKVEMQEERTQQKNRDKAMKIIRARVADHFAQIAQDEQDAERKSTIGTGDRSERIRTYNFPQNRVTDHRIGLTLQKLDTILSGKMDEVIDALVMYDQTQKLETLNQ.

Gln236 carries the post-translational modification N5-methylglutamine. The tract at residues 288–308 (QDEQDAERKSTIGTGDRSERI) is disordered. Basic and acidic residues predominate over residues 293-308 (AERKSTIGTGDRSERI).

This sequence belongs to the prokaryotic/mitochondrial release factor family. Methylated by PrmC. Methylation increases the termination efficiency of RF1.

Its subcellular location is the cytoplasm. In terms of biological role, peptide chain release factor 1 directs the termination of translation in response to the peptide chain termination codons UAG and UAA. This chain is Peptide chain release factor 1, found in Streptococcus uberis (strain ATCC BAA-854 / 0140J).